The primary structure comprises 194 residues: Holliday junction branch migration complex subunit RuvA (194 aa).

Positions 1-64 (MIGRLRGILA…EDSVSLYGFL (64 aa)) are domain I. A domain II region spans residues 65 to 140 (REGERRLFRD…RAADFSSGAP (76 aa)). Residues 140 to 144 (PITGQ) are flexible linker. The segment at 145–194 (LGPDAVSEATVALQQLGYKPAEAARMAREAGAEGDEVATVIRKALQAALR) is domain III.

Belongs to the RuvA family. Homotetramer. Forms an RuvA(8)-RuvB(12)-Holliday junction (HJ) complex. HJ DNA is sandwiched between 2 RuvA tetramers; dsDNA enters through RuvA and exits via RuvB. An RuvB hexamer assembles on each DNA strand where it exits the tetramer. Each RuvB hexamer is contacted by two RuvA subunits (via domain III) on 2 adjacent RuvB subunits; this complex drives branch migration. In the full resolvosome a probable DNA-RuvA(4)-RuvB(12)-RuvC(2) complex forms which resolves the HJ.

Its subcellular location is the cytoplasm. In terms of biological role, the RuvA-RuvB-RuvC complex processes Holliday junction (HJ) DNA during genetic recombination and DNA repair, while the RuvA-RuvB complex plays an important role in the rescue of blocked DNA replication forks via replication fork reversal (RFR). RuvA specifically binds to HJ cruciform DNA, conferring on it an open structure. The RuvB hexamer acts as an ATP-dependent pump, pulling dsDNA into and through the RuvAB complex. HJ branch migration allows RuvC to scan DNA until it finds its consensus sequence, where it cleaves and resolves the cruciform DNA. This chain is Holliday junction branch migration complex subunit RuvA, found in Xanthomonas campestris pv. campestris (strain 8004).